The chain runs to 422 residues: Serine--tRNA ligase (422 aa).

Residue 229-231 (TAE) participates in L-serine binding. Position 260–262 (260–262 (RKE)) interacts with ATP. An L-serine-binding site is contributed by Glu-283. 347–350 (EISS) is an ATP binding site. Ser-383 contributes to the L-serine binding site.

The protein belongs to the class-II aminoacyl-tRNA synthetase family. Type-1 seryl-tRNA synthetase subfamily. In terms of assembly, homodimer. The tRNA molecule binds across the dimer.

It localises to the cytoplasm. It carries out the reaction tRNA(Ser) + L-serine + ATP = L-seryl-tRNA(Ser) + AMP + diphosphate + H(+). The enzyme catalyses tRNA(Sec) + L-serine + ATP = L-seryl-tRNA(Sec) + AMP + diphosphate + H(+). The protein operates within aminoacyl-tRNA biosynthesis; selenocysteinyl-tRNA(Sec) biosynthesis; L-seryl-tRNA(Sec) from L-serine and tRNA(Sec): step 1/1. Functionally, catalyzes the attachment of serine to tRNA(Ser). Is also able to aminoacylate tRNA(Sec) with serine, to form the misacylated tRNA L-seryl-tRNA(Sec), which will be further converted into selenocysteinyl-tRNA(Sec). In Natranaerobius thermophilus (strain ATCC BAA-1301 / DSM 18059 / JW/NM-WN-LF), this protein is Serine--tRNA ligase.